A 382-amino-acid polypeptide reads, in one-letter code: uncharacterized protein (382 aa).

12 helical membrane passes run 14–34 (GLLLLTLAIAVLNTLVPLWLA), 45–65 (VVSSSYFTGNLVGTLLTGYVI), 75–95 (YLASFIFAAGCAGLGLMIGFW), 102–122 (FVAGVGCAMIWVVVESALMCS), 131–151 (LLAAYMMVYYVGTFLGQLLVS), 157–177 (LMSVLPWVTGLTLAGILPLLF), 206–226 (VNGCIISGIVLGSLYGLMPLF), 235–255 (ASIGFWMAVLVSAGILGQWPI), 270–290 (VQVFVVILGSIAMLSQAAMAP), 291–311 (ALFILGAAGFTLYPVAMAWAC), 325–345 (ALLLSYTVGSLLGPSFTAMLM), and 348–368 (FSDNLLFIMIASVSFIYLLML).

This sequence belongs to the major facilitator superfamily. YcaD (TC 2.A.1.26) family.

Its subcellular location is the cell inner membrane. This is an uncharacterized protein from Escherichia coli O17:K52:H18 (strain UMN026 / ExPEC).